Reading from the N-terminus, the 99-residue chain is UPF0751 protein BCE_A0020 (99 aa).

Belongs to the UPF0751 family.

In Bacillus cereus (strain ATCC 10987 / NRS 248), this protein is UPF0751 protein BCE_A0020.